A 447-amino-acid polypeptide reads, in one-letter code: Serine/threonine-protein phosphatase 2A 55 kDa regulatory subunit B delta isoform (447 aa).

WD repeat units follow at residues 26–65 (AEADIISTVEFNYSGELLATGDKGGRVVIFQREQESKNRP), 91–132 (EIEE…KRAE), 175–213 (AHTYHINSISVNSDYETYLSADDLRINLWHLEITDRSFN), 224–264 (ELTE…LCDR), 283–321 (EIISSISDVKFSHSGRYMMTRDYLSVKVWDLNMENRPVE), 338–379 (ENDC…DITL), and 414–447 (DFNKKILHTAWHPKENVIAVAATNNLYIFQDKMN).

Belongs to the phosphatase 2A regulatory subunit B family. As to quaternary structure, PP2A consists of a common heterodimeric core enzyme, composed of a 36 kDa catalytic subunit (subunit C) and a 65 kDa constant regulatory subunit (PR65 or subunit A), that associates with a variety of regulatory subunits.

It localises to the cytoplasm. Functionally, substrate-recognition subunit of protein phosphatase 2A (PP2A) that plays a key role in cell cycle by controlling mitosis entry and exit. The activity of PP2A complexes containing PPP2R2D (PR55-delta) fluctuate during the cell cycle: the activity is high in interphase and low in mitosis. This is Serine/threonine-protein phosphatase 2A 55 kDa regulatory subunit B delta isoform (ppp2r2d) from Danio rerio (Zebrafish).